We begin with the raw amino-acid sequence, 143 residues long: Transmembrane protein 80 (143 aa).

4 helical membrane-spanning segments follow: residues Met21–Ile41, Leu55–Leu75, Ala99–Leu119, and Ala121–Phe141.

The protein localises to the membrane. The protein resides in the cell projection. It is found in the cilium. In Homo sapiens (Human), this protein is Transmembrane protein 80.